Here is a 1622-residue protein sequence, read N- to C-terminus: FK506-binding protein 5 (1622 aa).

A PPIase FKBP-type domain is found at 178–269 (GDRVSIKYAG…IFDLEVTGSK (92 aa)). The disordered stretch occupies residues 268-306 (SKKKEGSEPSLPSLNGQPSNAPQQSLPTQLFDNSPVPQD). Over residues 277–303 (SLPSLNGQPSNAPQQSLPTQLFDNSPV) the composition is skewed to polar residues. At arginine 314 the chain carries Omega-N-methylarginine. 2 disordered regions span residues 320–432 (RATG…GFNN) and 518–538 (SPPP…PPPP). Positions 335 to 432 (ESNSRNSHSN…NMNNNNGFNN (98 aa)) are enriched in low complexity. 2 coiled-coil regions span residues 607–827 (LVQT…ETER) and 854–961 (KKEE…LESQ). Disordered regions lie at residues 1043–1097 (KQQQ…EVVV) and 1122–1622 (EEVK…VLPL). 2 stretches are compositionally biased toward acidic residues: residues 1050-1093 (KEEE…EEEK) and 1152-1168 (DDED…DINE). The segment covering 1169-1182 (EDLKNIDAEIEKMQ) has biased composition (basic and acidic residues). 2 stretches are compositionally biased toward acidic residues: residues 1185-1199 (MGDE…EEEK) and 1222-1260 (ESEE…EQED). Residues 1261–1271 (KVESDVEEKIV) show a composition bias toward basic and acidic residues. Positions 1320–1335 (DDDEDNEKDVASDSEE) are enriched in acidic residues. Residues 1353–1369 (EEKVVEQVKEEINETKF) are compositionally biased toward basic and acidic residues. The segment covering 1380–1412 (TTTEEKEEEKEEEKVEEEEEKVVEPPTIDDDET) has biased composition (acidic residues). 2 stretches are compositionally biased toward low complexity: residues 1435-1449 (STTA…TSST) and 1465-1504 (KTSF…TPTS). Composition is skewed to polar residues over residues 1519–1532 (FGNS…PSTT) and 1581–1609 (AKSN…SPLT).

Belongs to the FKBP-type PPIase family.

It carries out the reaction [protein]-peptidylproline (omega=180) = [protein]-peptidylproline (omega=0). Its activity is regulated as follows. Inhibited by both FK506 and rapamycin. Functionally, PPIases accelerate the folding of proteins by catalyzing the cis-trans isomerization of proline imidic peptide bonds in oligopeptides. In Dictyostelium discoideum (Social amoeba), this protein is FK506-binding protein 5 (fkbp5).